The sequence spans 303 residues: ATP synthase gamma chain (303 aa).

The protein belongs to the ATPase gamma chain family. F-type ATPases have 2 components, CF(1) - the catalytic core - and CF(0) - the membrane proton channel. CF(1) has five subunits: alpha(3), beta(3), gamma(1), delta(1), epsilon(1). CF(0) has three main subunits: a, b and c.

It localises to the cell membrane. In terms of biological role, produces ATP from ADP in the presence of a proton gradient across the membrane. The gamma chain is believed to be important in regulating ATPase activity and the flow of protons through the CF(0) complex. This is ATP synthase gamma chain from Nocardioides sp. (strain ATCC BAA-499 / JS614).